Here is a 524-residue protein sequence, read N- to C-terminus: Probable myosin-binding protein 5 (524 aa).

A helical membrane pass occupies residues 20–40 (FLIYALLEWILIIILFIDGFL). The region spanning 299-397 (SILQHLNRQV…ELEAGIEVYR (99 aa)) is the GTD-binding domain. A coiled-coil region spans residues 462–490 (SRKDMLVKEISEITERLNAIESKGELLQQ).

It localises to the membrane. Its function is as follows. Probable membrane-anchored myosin receptors. In Arabidopsis thaliana (Mouse-ear cress), this protein is Probable myosin-binding protein 5.